A 316-amino-acid chain; its full sequence is tRNA pseudouridine synthase B (316 aa).

The active-site Nucleophile is the Asp-47.

It belongs to the pseudouridine synthase TruB family. Type 1 subfamily.

It catalyses the reaction uridine(55) in tRNA = pseudouridine(55) in tRNA. Responsible for synthesis of pseudouridine from uracil-55 in the psi GC loop of transfer RNAs. The polypeptide is tRNA pseudouridine synthase B (Aliivibrio fischeri (strain MJ11) (Vibrio fischeri)).